We begin with the raw amino-acid sequence, 239 residues long: uncharacterized protein (239 aa).

An HTH cro/C1-type domain is found at I13–L66. Positions S24–G43 form a DNA-binding region, H-T-H motif.

This is an uncharacterized protein from Haemophilus influenzae (strain ATCC 51907 / DSM 11121 / KW20 / Rd).